We begin with the raw amino-acid sequence, 100 residues long: Large ribosomal subunit protein bL21 (100 aa).

The protein belongs to the bacterial ribosomal protein bL21 family. Part of the 50S ribosomal subunit. Contacts protein L20.

Its function is as follows. This protein binds to 23S rRNA in the presence of protein L20. The chain is Large ribosomal subunit protein bL21 from Mycoplasmoides gallisepticum (strain R(low / passage 15 / clone 2)) (Mycoplasma gallisepticum).